We begin with the raw amino-acid sequence, 223 residues long: Serine/threonine/tyrosine-interacting protein A (223 aa).

The Tyrosine-protein phosphatase domain maps to 28-176 (EMQEILPGLF…LQEYEAIYLA (149 aa)).

The protein belongs to the protein-tyrosine phosphatase family. Non-receptor class subfamily.

Functionally, catalytically inactive phosphatase. The polypeptide is Serine/threonine/tyrosine-interacting protein A (styx-a) (Xenopus laevis (African clawed frog)).